We begin with the raw amino-acid sequence, 211 residues long: Protein-methionine-sulfoxide reductase heme-binding subunit MsrQ (211 aa).

4 helical membrane-spanning segments follow: residues 17 to 37 (LAGLLPFLWLVWAINHGGLGA), 82 to 102 (LWCFAWATLHLTSYALLELGV), 116 to 136 (PYLTLGIISWVILLALAFTST), and 153 to 173 (FVYLVAILAPIHYLWSVKIIS).

This sequence belongs to the MsrQ family. Heterodimer of a catalytic subunit (MsrP) and a heme-binding subunit (MsrQ). It depends on FMN as a cofactor. The cofactor is heme b.

The protein resides in the cell inner membrane. Functionally, part of the MsrPQ system that repairs oxidized periplasmic proteins containing methionine sulfoxide residues (Met-O), using respiratory chain electrons. Thus protects these proteins from oxidative-stress damage caused by reactive species of oxygen and chlorine generated by the host defense mechanisms. MsrPQ is essential for the maintenance of envelope integrity under bleach stress, rescuing a wide series of structurally unrelated periplasmic proteins from methionine oxidation, including the primary periplasmic chaperone SurA and the lipoprotein Pal. MsrQ provides electrons for reduction to the reductase catalytic subunit MsrP, using the quinone pool of the respiratory chain. This Shigella boydii serotype 18 (strain CDC 3083-94 / BS512) protein is Protein-methionine-sulfoxide reductase heme-binding subunit MsrQ.